Reading from the N-terminus, the 508-residue chain is WD repeat-containing protein DDB_G0290555 (508 aa).

WD repeat units lie at residues Thr32 to Glu74, Asn159 to Ser198, Phe252 to Ser292, and Asp295 to Lys334. The disordered stretch occupies residues Glu368 to Lys508. Residues Met399–Asn435 are compositionally biased toward acidic residues. The span at Ile436–Ser446 shows a compositional bias: basic and acidic residues. A compositionally biased stretch (acidic residues) spans Asp447–Asp456. The segment covering Asn471 to Thr493 has biased composition (low complexity). Positions Leu497–Lys508 are enriched in basic residues.

The polypeptide is WD repeat-containing protein DDB_G0290555 (Dictyostelium discoideum (Social amoeba)).